We begin with the raw amino-acid sequence, 171 residues long: Peptide deformylase (171 aa).

Fe cation-binding residues include Cys-91 and His-133. The active site involves Glu-134. A Fe cation-binding site is contributed by His-137.

This sequence belongs to the polypeptide deformylase family. It depends on Fe(2+) as a cofactor.

The enzyme catalyses N-terminal N-formyl-L-methionyl-[peptide] + H2O = N-terminal L-methionyl-[peptide] + formate. Removes the formyl group from the N-terminal Met of newly synthesized proteins. Requires at least a dipeptide for an efficient rate of reaction. N-terminal L-methionine is a prerequisite for activity but the enzyme has broad specificity at other positions. This chain is Peptide deformylase, found in Sodalis glossinidius (strain morsitans).